The primary structure comprises 92 residues: Signal recognition particle 19 kDa protein (92 aa).

It belongs to the SRP19 family. Part of the signal recognition particle protein translocation system, which is composed of SRP and FtsY. Archaeal SRP consists of a 7S RNA molecule of 300 nucleotides and two protein subunits: SRP54 and SRP19.

Its subcellular location is the cytoplasm. Its function is as follows. Involved in targeting and insertion of nascent membrane proteins into the cytoplasmic membrane. Binds directly to 7S RNA and mediates binding of the 54 kDa subunit of the SRP. The sequence is that of Signal recognition particle 19 kDa protein from Methanosphaera stadtmanae (strain ATCC 43021 / DSM 3091 / JCM 11832 / MCB-3).